The primary structure comprises 151 residues: Deoxyuridine 5'-triphosphate nucleotidohydrolase (151 aa).

Residues 70–72 (RSG), asparagine 83, 87–89 (LID), and methionine 97 contribute to the substrate site.

The protein belongs to the dUTPase family. It depends on Mg(2+) as a cofactor.

It catalyses the reaction dUTP + H2O = dUMP + diphosphate + H(+). It functions in the pathway pyrimidine metabolism; dUMP biosynthesis; dUMP from dCTP (dUTP route): step 2/2. In terms of biological role, this enzyme is involved in nucleotide metabolism: it produces dUMP, the immediate precursor of thymidine nucleotides and it decreases the intracellular concentration of dUTP so that uracil cannot be incorporated into DNA. In Histophilus somni (strain 129Pt) (Haemophilus somnus), this protein is Deoxyuridine 5'-triphosphate nucleotidohydrolase.